The following is a 300-amino-acid chain: Fluorinase (300 aa).

S-adenosyl-L-methionine is bound by residues aspartate 16, 21-23, tyrosine 77, serine 158, aspartate 211, asparagine 216, 270-271, and 278-280; these read DDS, SR, and RNA.

It belongs to the SAM hydrolase / SAM-dependent halogenase family. Homohexamer.

The catalysed reaction is fluoride + S-adenosyl-L-methionine = 5'-deoxy-5'-fluoroadenosine + L-methionine. It catalyses the reaction chloride + S-adenosyl-L-methionine = 5'-chloro-5'-deoxyadenosine + L-methionine. Activity is severely inhibited by 1 mM Cu(2+) or Zn(2+). Catalyzes the formation of a C-F bond by combining S-adenosyl-L-methionine (SAM) and fluoride to generate 5'-fluoro-5'-deoxyadenosine (5'-FDA) and L-methionine. Probably involved in fluoroacetate (FAc) and 4-fluorothreonine (4-FT) biosynthesis. In vitro, can also catalyze the conversion of chloride and SAM to 5'-chloro-5'-deoxyadenosine (5'-CIDA) and L-methionine in the presence of L-amino acid oxidase. The sequence is that of Fluorinase from Nocardia brasiliensis (strain ATCC 700358 / HUJEG-1).